A 142-amino-acid polypeptide reads, in one-letter code: Large ribosomal subunit protein uL13 (142 aa).

This sequence belongs to the universal ribosomal protein uL13 family. In terms of assembly, part of the 50S ribosomal subunit.

Its function is as follows. This protein is one of the early assembly proteins of the 50S ribosomal subunit, although it is not seen to bind rRNA by itself. It is important during the early stages of 50S assembly. This Buchnera aphidicola subsp. Schizaphis graminum (strain Sg) protein is Large ribosomal subunit protein uL13.